Reading from the N-terminus, the 107-residue chain is Phosphoribosyl-ATP pyrophosphatase (107 aa).

Belongs to the PRA-PH family.

The protein resides in the cytoplasm. It carries out the reaction 1-(5-phospho-beta-D-ribosyl)-ATP + H2O = 1-(5-phospho-beta-D-ribosyl)-5'-AMP + diphosphate + H(+). It participates in amino-acid biosynthesis; L-histidine biosynthesis; L-histidine from 5-phospho-alpha-D-ribose 1-diphosphate: step 2/9. This chain is Phosphoribosyl-ATP pyrophosphatase, found in Rhizobium johnstonii (strain DSM 114642 / LMG 32736 / 3841) (Rhizobium leguminosarum bv. viciae).